A 190-amino-acid chain; its full sequence is MTETPNTSSEEIQTSEPSSDNELQTLQQENANLKAELKEKNDRYLMALAEAENSRKRLQKERTEMMQYAVENALLDFLPPMESMEKALGFASQTSDEVKNWAIGFQMILQQFKQVFEDKGVVEYSSKGELFNPYLHEAVEIEETTDIPEGTILEEFTKGYKIGDRPIRVAKVKVAKFPTKGNNDSNEEKE.

Residues 1-31 (MTETPNTSSEEIQTSEPSSDNELQTLQQENA) show a composition bias toward polar residues. Positions 1 to 34 (MTETPNTSSEEIQTSEPSSDNELQTLQQENANLK) are disordered.

This sequence belongs to the GrpE family. As to quaternary structure, homodimer.

It localises to the cytoplasm. Its function is as follows. Participates actively in the response to hyperosmotic and heat shock by preventing the aggregation of stress-denatured proteins, in association with DnaK and GrpE. It is the nucleotide exchange factor for DnaK and may function as a thermosensor. Unfolded proteins bind initially to DnaJ; upon interaction with the DnaJ-bound protein, DnaK hydrolyzes its bound ATP, resulting in the formation of a stable complex. GrpE releases ADP from DnaK; ATP binding to DnaK triggers the release of the substrate protein, thus completing the reaction cycle. Several rounds of ATP-dependent interactions between DnaJ, DnaK and GrpE are required for fully efficient folding. In Chlamydia muridarum (strain MoPn / Nigg), this protein is Protein GrpE.